A 429-amino-acid chain; its full sequence is Adenylosuccinate synthetase (429 aa).

Residues 13–19 (GDEGKGK) and 41–43 (GHT) each bind GTP. The active-site Proton acceptor is the Asp-14. Mg(2+)-binding residues include Asp-14 and Gly-41. Residues 14–17 (DEGK), 39–42 (NAGH), Thr-130, Arg-144, Gln-224, Thr-239, and Arg-303 contribute to the IMP site. The Proton donor role is filled by His-42. 299–305 (ATTGRAR) contacts substrate. GTP-binding positions include Arg-305, 331-333 (KLD), and 412-414 (STG).

The protein belongs to the adenylosuccinate synthetase family. As to quaternary structure, homodimer. Mg(2+) serves as cofactor.

It localises to the cytoplasm. The enzyme catalyses IMP + L-aspartate + GTP = N(6)-(1,2-dicarboxyethyl)-AMP + GDP + phosphate + 2 H(+). The protein operates within purine metabolism; AMP biosynthesis via de novo pathway; AMP from IMP: step 1/2. Functionally, plays an important role in the de novo pathway of purine nucleotide biosynthesis. Catalyzes the first committed step in the biosynthesis of AMP from IMP. The protein is Adenylosuccinate synthetase of Psychrobacter cryohalolentis (strain ATCC BAA-1226 / DSM 17306 / VKM B-2378 / K5).